The chain runs to 190 residues: Holliday junction branch migration complex subunit RuvA (190 aa).

A domain I region spans residues methionine 1–glycine 64. The tract at residues threonine 65–glycine 137 is domain II. Residues glycine 137–histidine 141 form a flexible linker region. The domain III stretch occupies residues alanine 142–arginine 190.

It belongs to the RuvA family. As to quaternary structure, homotetramer. Forms an RuvA(8)-RuvB(12)-Holliday junction (HJ) complex. HJ DNA is sandwiched between 2 RuvA tetramers; dsDNA enters through RuvA and exits via RuvB. An RuvB hexamer assembles on each DNA strand where it exits the tetramer. Each RuvB hexamer is contacted by two RuvA subunits (via domain III) on 2 adjacent RuvB subunits; this complex drives branch migration. In the full resolvosome a probable DNA-RuvA(4)-RuvB(12)-RuvC(2) complex forms which resolves the HJ.

It localises to the cytoplasm. Functionally, the RuvA-RuvB-RuvC complex processes Holliday junction (HJ) DNA during genetic recombination and DNA repair, while the RuvA-RuvB complex plays an important role in the rescue of blocked DNA replication forks via replication fork reversal (RFR). RuvA specifically binds to HJ cruciform DNA, conferring on it an open structure. The RuvB hexamer acts as an ATP-dependent pump, pulling dsDNA into and through the RuvAB complex. HJ branch migration allows RuvC to scan DNA until it finds its consensus sequence, where it cleaves and resolves the cruciform DNA. The chain is Holliday junction branch migration complex subunit RuvA from Bordetella avium (strain 197N).